The sequence spans 252 residues: Chitooligosaccharide deacetylase (252 aa).

H61 and H125 together coordinate Mg(2+).

This sequence belongs to the YdjC deacetylase family. ChbG subfamily. As to quaternary structure, homodimer. The cofactor is Mg(2+).

It is found in the cytoplasm. The enzyme catalyses N,N'-diacetylchitobiose + H2O = N-acetyl-beta-D-glucosaminyl-(1-&gt;4)-D-glucosamine + acetate. It catalyses the reaction diacetylchitobiose-6'-phosphate + H2O = N'-monoacetylchitobiose-6'-phosphate + acetate. It participates in glycan degradation; chitin degradation. Its function is as follows. Involved in the degradation of chitin. ChbG is essential for growth on the acetylated chitooligosaccharides chitobiose and chitotriose but is dispensable for growth on cellobiose and chitosan dimer, the deacetylated form of chitobiose. Deacetylation of chitobiose-6-P and chitotriose-6-P is necessary for both the activation of the chb promoter by the regulatory protein ChbR and the hydrolysis of phosphorylated beta-glucosides by the phospho-beta-glucosidase ChbF. Catalyzes the removal of only one acetyl group from chitobiose-6-P to yield monoacetylchitobiose-6-P, the inducer of ChbR and the substrate of ChbF. This Escherichia coli O8 (strain IAI1) protein is Chitooligosaccharide deacetylase.